The sequence spans 325 residues: Lipid droplet-associated hydrolase (325 aa).

The active-site Nucleophile is Ser-139. Catalysis depends on charge relay system residues Asp-271 and His-300.

Belongs to the AB hydrolase superfamily. LDAH family.

It localises to the lipid droplet. The protein localises to the endoplasmic reticulum. It carries out the reaction a cholesterol ester + H2O = cholesterol + a fatty acid + H(+). In terms of biological role, probable serine lipid hydrolase associated with lipid droplets. Has low cholesterol esterase activity. Appears to lack triglyceride lipase activity. Involved in cholesterol and triglyceride homeostasis; stimulates cellular triglyceride accumulation and cellular cholesterol release. Acts antagonistically with PNPLA2/ATGL in regulation of cellular lipid stores. May regulate triglyceride accumulation indirectly through stimulation of PNPLA2/ATGL ubiquitination and proteasomal degradation. Promotes microtubule-dependent lipid droplet fusion. Highly expressed in macrophage-rich areas in atherosclerotic lesions, suggesting that it could promote cholesterol ester turnover in macrophages. The polypeptide is Lipid droplet-associated hydrolase (Rattus norvegicus (Rat)).